We begin with the raw amino-acid sequence, 471 residues long: Heat shock 70 kDa protein 13 (471 aa).

An N-terminal signal peptide occupies residues 1-22; it reads MAGEMTILGSAVLTLLLAGYLA. N-linked (GlcNAc...) asparagine glycosylation is present at Asn184. Residues 316-339 are disordered; sequence NDSQKPQNADSKLPEDQLTPGDGH.

It belongs to the heat shock protein 70 family. Binds UBQLN2.

It localises to the microsome. The protein resides in the endoplasmic reticulum. In terms of biological role, has peptide-independent ATPase activity. The chain is Heat shock 70 kDa protein 13 (Hspa13) from Rattus norvegicus (Rat).